Reading from the N-terminus, the 629-residue chain is Solute carrier family 22 member 14 (629 aa).

The disordered stretch occupies residues M1–R21. At M1–R67 the chain is on the cytoplasmic side. Positions Y7–S16 are enriched in polar residues. A helical membrane pass occupies residues L68–F88. At L89–E183 the chain is on the extracellular side. Residues N98, N116, N124, and N149 are each glycosylated (N-linked (GlcNAc...) asparagine). A helical transmembrane segment spans residues N184–S204. Over D205–R209 the chain is Cytoplasmic. A helical membrane pass occupies residues Y210–V230. The Extracellular segment spans residues S231–R240. The chain crosses the membrane as a helical span at residues F241–W261. Topologically, residues L262 to Q269 are cytoplasmic. A helical membrane pass occupies residues A270–Y290. The Extracellular portion of the chain corresponds to K291 to W295. A helical transmembrane segment spans residues R296–L316. The Cytoplasmic portion of the chain corresponds to R317–K378. A helical transmembrane segment spans residues V379–L399. Residues K400–Y409 are Extracellular-facing. The helical transmembrane segment at F410–L430 threads the bilayer. The Cytoplasmic portion of the chain corresponds to E431–K436. A helical membrane pass occupies residues W437–P457. Topologically, residues Q458–T463 are extracellular. Residues I464–I484 form a helical membrane-spanning segment. Residues Y485–S496 lie on the Cytoplasmic side of the membrane. A helical transmembrane segment spans residues T497 to F517. Topologically, residues K518 to Q523 are extracellular. A helical membrane pass occupies residues L524 to P544. Topologically, residues E545–P629 are cytoplasmic.

Belongs to the major facilitator (TC 2.A.1) superfamily. Organic cation transporter (TC 2.A.1.19) family. As to expression, testis-specific (at protein level). Specifically expressed in male germ cells (at protein level).

Its subcellular location is the mitochondrion inner membrane. It is found in the cell projection. The protein resides in the cilium. It localises to the flagellum membrane. It catalyses the reaction riboflavin(in) = riboflavin(out). Riboflavin transporter localized at the inner mitochondrial membrane of the spermatozoa midpiece, which is required for male fertility. SLC22A14-mediated riboflavin transport is essential for spermatozoa energy generation and motility: riboflavin is the precursor of FMN and FAD, which are coenzymes of many enzymes in the TCA cycle (the citric acid cycle) in mitochondria. Required for sperm motility and normal sperm flagellar structure. This chain is Solute carrier family 22 member 14, found in Mus musculus (Mouse).